A 218-amino-acid polypeptide reads, in one-letter code: Protein GrpE (218 aa).

The disordered stretch occupies residues 1 to 78; it reads MSEFNKDDYL…DSADTLTPLG (78 aa). Residues 14 to 58 show a composition bias toward low complexity; sequence PDPSDAEAAAQASSGADASAESGSAQDSAAQAPSNEGADAAPAAA.

This sequence belongs to the GrpE family. In terms of assembly, homodimer.

The protein localises to the cytoplasm. Functionally, participates actively in the response to hyperosmotic and heat shock by preventing the aggregation of stress-denatured proteins, in association with DnaK and GrpE. It is the nucleotide exchange factor for DnaK and may function as a thermosensor. Unfolded proteins bind initially to DnaJ; upon interaction with the DnaJ-bound protein, DnaK hydrolyzes its bound ATP, resulting in the formation of a stable complex. GrpE releases ADP from DnaK; ATP binding to DnaK triggers the release of the substrate protein, thus completing the reaction cycle. Several rounds of ATP-dependent interactions between DnaJ, DnaK and GrpE are required for fully efficient folding. This chain is Protein GrpE, found in Bifidobacterium longum (strain NCC 2705).